A 558-amino-acid chain; its full sequence is Dihydroxy-acid dehydratase (558 aa).

Position 78 (Asp-78) interacts with Mg(2+). Cys-119 contributes to the [2Fe-2S] cluster binding site. Mg(2+)-binding residues include Asp-120 and Lys-121. The residue at position 121 (Lys-121) is an N6-carboxylysine. Cys-191 provides a ligand contact to [2Fe-2S] cluster. Glu-443 contacts Mg(2+). Catalysis depends on Ser-469, which acts as the Proton acceptor.

It belongs to the IlvD/Edd family. Homodimer. It depends on [2Fe-2S] cluster as a cofactor. Mg(2+) serves as cofactor.

The enzyme catalyses (2R)-2,3-dihydroxy-3-methylbutanoate = 3-methyl-2-oxobutanoate + H2O. It catalyses the reaction (2R,3R)-2,3-dihydroxy-3-methylpentanoate = (S)-3-methyl-2-oxopentanoate + H2O. Its pathway is amino-acid biosynthesis; L-isoleucine biosynthesis; L-isoleucine from 2-oxobutanoate: step 3/4. It participates in amino-acid biosynthesis; L-valine biosynthesis; L-valine from pyruvate: step 3/4. In terms of biological role, functions in the biosynthesis of branched-chain amino acids. Catalyzes the dehydration of (2R,3R)-2,3-dihydroxy-3-methylpentanoate (2,3-dihydroxy-3-methylvalerate) into 2-oxo-3-methylpentanoate (2-oxo-3-methylvalerate) and of (2R)-2,3-dihydroxy-3-methylbutanoate (2,3-dihydroxyisovalerate) into 2-oxo-3-methylbutanoate (2-oxoisovalerate), the penultimate precursor to L-isoleucine and L-valine, respectively. The protein is Dihydroxy-acid dehydratase of Solidesulfovibrio magneticus (strain ATCC 700980 / DSM 13731 / RS-1) (Desulfovibrio magneticus).